Reading from the N-terminus, the 235-residue chain is Phosphate-specific transport system accessory protein PhoU homolog 2 (235 aa).

This sequence belongs to the PhoU family. Homodimer.

Its subcellular location is the cytoplasm. In terms of biological role, plays a role in the regulation of phosphate uptake. This Thermotoga maritima (strain ATCC 43589 / DSM 3109 / JCM 10099 / NBRC 100826 / MSB8) protein is Phosphate-specific transport system accessory protein PhoU homolog 2 (phoU2).